A 517-amino-acid chain; its full sequence is E3 ubiquitin-protein ligase TRIM65 (517 aa).

An N-acetylalanine modification is found at Ala-2. The RING-type zinc-finger motif lies at 12–51 (CAICLGLYQDPVTLPCGHNFCGACIRDWWDRCGKACPECR). A disordered region spans residues 75–94 (AGPARDPGPDPGPGPDPAAR). A B box-type zinc finger spans residues 90-137 (DPAARCPRHGRPLELFCRTEGRCVCSVCTVRECRLHERALLDAERLKR). Zn(2+) contacts are provided by Cys-95, His-98, Cys-117, and His-125. A coiled-coil region spans residues 139-227 (AQLRASLEVT…QRLRVHLEAV (89 aa)). Ser-185 is modified (phosphoserine). Lys-206 is covalently cross-linked ((Microbial infection) Glycyl lysine isopeptide (Lys-Gly) (interchain with G-Cter in ubiquitin)). The B30.2/SPRY domain maps to 313–506 (APVPSTVCPL…LTLCHQPGAV (194 aa)).

It belongs to the TRIM/RBCC family. As to quaternary structure, homo-multimerizes. Interacts with ARRDC4.

The protein localises to the cytoplasm. The catalysed reaction is S-ubiquitinyl-[E2 ubiquitin-conjugating enzyme]-L-cysteine + [acceptor protein]-L-lysine = [E2 ubiquitin-conjugating enzyme]-L-cysteine + N(6)-ubiquitinyl-[acceptor protein]-L-lysine.. The protein operates within protein modification; protein ubiquitination. Functionally, E3 ubiquitin ligase that plays a role in several processes including innate immnity, autophagy or inflammation. Negatively regulates miRNAs by modulating the ubiquitination and stability of TNRC6A, a protein involved in RNA-mediated gene silencing by both micro-RNAs (miRNAs) and short interfering RNAs. This ubiquitination results in the suppressed expression of miR-138-5p leading to increased autophagy. Upon enteroviral infection, promotes 'Lys-63'-mediated ubiquitination activation of IFIH1/MDA5 leading to innate signaling cascade. Mechanistically, selectively recognizes MDA5 filaments that occur on dsRNAs. Plays also a role in limitation of inflammation through different mechanisms. First, promotes 'Lys-48'-mediated ubiquitination of VCAM1 leading to its degradation and limitation of LPS-induced lung inflammation. In addition, negatively regulates inflammasome activation by promoting 'lys48'-linked ubiquitination of NLRP3 which is critical for the inhibition of NLRP3 inflammasome activation in resting macrophages. The protein is E3 ubiquitin-protein ligase TRIM65 (TRIM65) of Homo sapiens (Human).